Reading from the N-terminus, the 976-residue chain is Apical junction component 1 homolog (976 aa).

The disordered stretch occupies residues 21–49 (ATPGPASKCSPCERSVARPAEPAPFNKRH). S52 bears the Phosphoserine mark. Disordered stretches follow at residues 61 to 136 (GPAM…EPAY), 220 to 242 (PQFHGLTVPGPRHMALSRTPTPS), and 264 to 294 (YAERRSLPFTTPPGPTQFFYTEEPQGFRGSF). Over residues 98–113 (RAPPGLTPAPASPPVL) the composition is skewed to pro residues. Over residues 116 to 134 (RGREAQRAARAEASPRREP) the composition is skewed to basic and acidic residues. The residue at position 129 (S129) is a Phosphoserine. Position 322 is an omega-N-methylarginine (R322). The tract at residues 412-443 (LQVVPPSDPDPLLASWHGGTGTSPPRLATDSR) is disordered. Phosphoserine is present on residues S468, S509, and S512. 2 disordered regions span residues 539-574 (DLRATERPSARAWELPGGRTRPPPHAAPDGPTSGRQ) and 614-660 (LDSR…ADED). 2 stretches are compositionally biased toward low complexity: residues 616-625 (SRPAGSGAPA) and 633-655 (PASAGSAEEPAAPGEAADASPEP). The residue at position 749 (R749) is an Asymmetric dimethylarginine; alternate. R749 is subject to Omega-N-methylarginine; alternate. Positions 855-888 (GSPARPPPARSREPDMETLILTPPPGTAGLDQDG) are disordered.

It is found in the apical cell membrane. It localises to the cell projection. The protein localises to the cilium. Its subcellular location is the cell junction. The protein resides in the adherens junction. Its function is as follows. May be involved in the control of adherens junction integrity. This chain is Apical junction component 1 homolog, found in Homo sapiens (Human).